A 225-amino-acid chain; its full sequence is UPF0758 protein Shewmr7_0359 (225 aa).

One can recognise an MPN domain in the interval 102–224 (VLTNPDLTRD…IVSFAERGWI (123 aa)). The Zn(2+) site is built by His173, His175, and Asp186. The short motif at 173-186 (HNHPSGIAEPSQAD) is the JAMM motif element.

Belongs to the UPF0758 family.

The protein is UPF0758 protein Shewmr7_0359 of Shewanella sp. (strain MR-7).